We begin with the raw amino-acid sequence, 183 residues long: UPF0316 protein EF_1609 (183 aa).

Helical transmembrane passes span 1 to 21 (MVVD…YITL), 35 to 55 (VIAP…LSMV), and 62 to 82 (PLNL…GIKI).

This sequence belongs to the UPF0316 family.

It is found in the cell membrane. The chain is UPF0316 protein EF_1609 from Enterococcus faecalis (strain ATCC 700802 / V583).